The following is a 262-amino-acid chain: Small ribosomal subunit protein uS2 (262 aa).

The segment at 225-262 (KQGEQLTEEAKPEDKEDEKGQAEEKEVKEENNSANKEE) is disordered. Residues 232–262 (EEAKPEDKEDEKGQAEEKEVKEENNSANKEE) show a composition bias toward basic and acidic residues.

The protein belongs to the universal ribosomal protein uS2 family.

This Halothermothrix orenii (strain H 168 / OCM 544 / DSM 9562) protein is Small ribosomal subunit protein uS2.